The primary structure comprises 502 residues: Protein ANKUB1 (502 aa).

The protein is Protein ANKUB1 (ANKUB1) of Homo sapiens (Human).